The following is a 406-amino-acid chain: Accessory Sec system protein translocase subunit SecY2 (406 aa).

10 helical membrane passes run Ser14 to Ile34, Phe63 to Phe83, Phe108 to Ile128, Gly131 to Leu151, Ser156 to Pro176, Leu190 to Val210, Phe246 to Leu266, Pro285 to Val305, Ala344 to Ile364, and Tyr368 to Val388.

The protein belongs to the SecY/SEC61-alpha family. SecY2 subfamily. As to quaternary structure, component of the accessory SecA2/SecY2 protein translocase complex required to export cell wall proteins. May form heterotrimers with SecE and SecG subunits.

It is found in the cell membrane. Its function is as follows. Part of the accessory SecA2/SecY2 system specifically required for export of possible cell wall proteins. The central subunit of a protein translocation channel. This Streptococcus salivarius (strain CCHSS3) protein is Accessory Sec system protein translocase subunit SecY2.